We begin with the raw amino-acid sequence, 821 residues long: Leucine--tRNA ligase (821 aa).

Residues Pro-42 to His-52 carry the 'HIGH' region motif. Positions Lys-583–Ser-587 match the 'KMSKS' region motif. Lys-586 contacts ATP.

This sequence belongs to the class-I aminoacyl-tRNA synthetase family.

The protein resides in the cytoplasm. It catalyses the reaction tRNA(Leu) + L-leucine + ATP = L-leucyl-tRNA(Leu) + AMP + diphosphate. The polypeptide is Leucine--tRNA ligase (Carboxydothermus hydrogenoformans (strain ATCC BAA-161 / DSM 6008 / Z-2901)).